We begin with the raw amino-acid sequence, 376 residues long: MSKRDYYEVLGVGRDASEREIKKAYKRLAMKFHPDRNPGDKAAEASFKEVKEAYEILTDSDKKAAYDQFGHAGVDPNRGGGGFGGGADFGDVFGDVFGDIFGGGRRGGQRQAARGSDLRYNLELSLEEAVRGLTKELRIPTLATCDLCDGSGAKKGSSPTTCGTCHGQGQVQMRQGFFAVQQACPTCHGRGKIIKDPCGKCHGEGRVEKSKTLSVKIPAGVDTGDRIRLSGEGEAGEFGAPPGDLYVQVTVREHAIFVRDGNNLYCEVPISFSTAALGGEIEVPTLDGKVNLKIPSETQTGRMFRLRGKGVKSVRSHAVGDLLCKVVMETPVNLNDKQKELLREFDNTLTGSSKKHSPKAEGFFDGVKKFFQDLNS.

In terms of domain architecture, J spans 5 to 70 (DYYEVLGVGR…DKKAAYDQFG (66 aa)). Residues 132–210 (GLTKELRIPT…CHGEGRVEKS (79 aa)) form a CR-type zinc finger. Residues Cys145, Cys148, Cys162, Cys165, Cys184, Cys187, Cys198, and Cys201 each coordinate Zn(2+). CXXCXGXG motif repeat units follow at residues 145 to 152 (CDLCDGSG), 162 to 169 (CGTCHGQG), 184 to 191 (CPTCHGRG), and 198 to 205 (CGKCHGEG).

It belongs to the DnaJ family. In terms of assembly, homodimer. The cofactor is Zn(2+).

It is found in the cytoplasm. In terms of biological role, participates actively in the response to hyperosmotic and heat shock by preventing the aggregation of stress-denatured proteins and by disaggregating proteins, also in an autonomous, DnaK-independent fashion. Unfolded proteins bind initially to DnaJ; upon interaction with the DnaJ-bound protein, DnaK hydrolyzes its bound ATP, resulting in the formation of a stable complex. GrpE releases ADP from DnaK; ATP binding to DnaK triggers the release of the substrate protein, thus completing the reaction cycle. Several rounds of ATP-dependent interactions between DnaJ, DnaK and GrpE are required for fully efficient folding. Also involved, together with DnaK and GrpE, in the DNA replication of plasmids through activation of initiation proteins. This chain is Chaperone protein DnaJ, found in Shewanella loihica (strain ATCC BAA-1088 / PV-4).